A 65-amino-acid polypeptide reads, in one-letter code: Large ribosomal subunit protein bL35 (65 aa).

The segment covering 1–15 (MPKMKTKKSASKRFT) has biased composition (basic residues). Positions 1–27 (MPKMKTKKSASKRFTARPNGSFKRGQA) are disordered.

It belongs to the bacterial ribosomal protein bL35 family.

This Cupriavidus pinatubonensis (strain JMP 134 / LMG 1197) (Cupriavidus necator (strain JMP 134)) protein is Large ribosomal subunit protein bL35.